Here is a 149-residue protein sequence, read N- to C-terminus: Evolved beta-galactosidase subunit beta (149 aa).

As to quaternary structure, heterooctamer of 4 alpha and 4 beta subunits.

In terms of biological role, required for full activity of the EbgA enzyme. Exact function not known. The sequence is that of Evolved beta-galactosidase subunit beta (ebgC) from Escherichia coli O6:H1 (strain CFT073 / ATCC 700928 / UPEC).